We begin with the raw amino-acid sequence, 388 residues long: Chorismate synthase (388 aa).

The NADP(+) site is built by Arg-39 and Arg-45. Residues 95-118 (EKNEKSRRVSRPRPGHADLVGGMK) form a disordered region. FMN contacts are provided by residues 130-132 (RSS), 251-252 (NA), Gly-296, 311-315 (KPIPT), and Arg-337.

The protein belongs to the chorismate synthase family. As to quaternary structure, homotetramer. Requires FMNH2 as cofactor.

It catalyses the reaction 5-O-(1-carboxyvinyl)-3-phosphoshikimate = chorismate + phosphate. The protein operates within metabolic intermediate biosynthesis; chorismate biosynthesis; chorismate from D-erythrose 4-phosphate and phosphoenolpyruvate: step 7/7. Functionally, catalyzes the anti-1,4-elimination of the C-3 phosphate and the C-6 proR hydrogen from 5-enolpyruvylshikimate-3-phosphate (EPSP) to yield chorismate, which is the branch point compound that serves as the starting substrate for the three terminal pathways of aromatic amino acid biosynthesis. This reaction introduces a second double bond into the aromatic ring system. The protein is Chorismate synthase of Listeria monocytogenes serovar 1/2a (strain ATCC BAA-679 / EGD-e).